Consider the following 434-residue polypeptide: Gamma-glutamyl phosphate reductase (434 aa).

It belongs to the gamma-glutamyl phosphate reductase family.

Its subcellular location is the cytoplasm. It carries out the reaction L-glutamate 5-semialdehyde + phosphate + NADP(+) = L-glutamyl 5-phosphate + NADPH + H(+). Its pathway is amino-acid biosynthesis; L-proline biosynthesis; L-glutamate 5-semialdehyde from L-glutamate: step 2/2. Its function is as follows. Catalyzes the NADPH-dependent reduction of L-glutamate 5-phosphate into L-glutamate 5-semialdehyde and phosphate. The product spontaneously undergoes cyclization to form 1-pyrroline-5-carboxylate. This Rhodopirellula baltica (strain DSM 10527 / NCIMB 13988 / SH1) protein is Gamma-glutamyl phosphate reductase.